The primary structure comprises 469 residues: IME2-dependent-signaling protein (469 aa).

Residue Met-1 is modified to N-acetylmethionine. Thr-13 carries the phosphothreonine modification. Disordered regions lie at residues 22 to 55, 67 to 92, and 117 to 143; these read KSWS…PATM, ARGS…QQQQ, and DLTL…PPLT. Ser-23, Ser-27, and Ser-39 each carry phosphoserine. Composition is skewed to polar residues over residues 25 to 42 and 67 to 82; these read SESQ…SPIG and ARGS…GSSQ. Residues Ser-122, Ser-130, Ser-136, Ser-147, and Ser-148 each carry the phosphoserine modification.

In terms of biological role, seems to act indirectly to modify IME2 activity, thus permitting IME2 to carry out later meiotic functions. In Saccharomyces cerevisiae (strain ATCC 204508 / S288c) (Baker's yeast), this protein is IME2-dependent-signaling protein (IDS2).